A 378-amino-acid polypeptide reads, in one-letter code: Cobalt-precorrin-5B C(1)-methyltransferase (378 aa).

It belongs to the CbiD family.

The catalysed reaction is Co-precorrin-5B + S-adenosyl-L-methionine = Co-precorrin-6A + S-adenosyl-L-homocysteine. It functions in the pathway cofactor biosynthesis; adenosylcobalamin biosynthesis; cob(II)yrinate a,c-diamide from sirohydrochlorin (anaerobic route): step 6/10. In terms of biological role, catalyzes the methylation of C-1 in cobalt-precorrin-5B to form cobalt-precorrin-6A. This Photorhabdus laumondii subsp. laumondii (strain DSM 15139 / CIP 105565 / TT01) (Photorhabdus luminescens subsp. laumondii) protein is Cobalt-precorrin-5B C(1)-methyltransferase.